The sequence spans 435 residues: Xylose isomerase (435 aa).

Residues H99 and D102 contribute to the active site. Residues E230, E266, H269, D294, D305, D307, and D337 each coordinate Mg(2+).

It belongs to the xylose isomerase family. In terms of assembly, homotetramer. The cofactor is Mg(2+).

The protein resides in the cytoplasm. The enzyme catalyses alpha-D-xylose = alpha-D-xylulofuranose. The polypeptide is Xylose isomerase (xylA) (Tetragenococcus halophilus (Pediococcus halophilus)).